Here is a 1487-residue protein sequence, read N- to C-terminus: Murinoglobulin-1 (1487 aa).

An N-terminal signal peptide occupies residues 1-24 (MKKNREAQLCLFSALLAFLPFASL). Cysteines 48 and 86 form a disulfide. Asn55 and Asn247 each carry an N-linked (GlcNAc...) asparagine glycan. 2 disulfides stabilise this stretch: Cys251/Cys283 and Cys269/Cys295. 4 N-linked (GlcNAc...) asparagine glycosylation sites follow: Asn301, Asn321, Asn393, and Asn508. 3 cysteine pairs are disulfide-bonded: Cys468-Cys563, Cys595-Cys784, and Cys643-Cys689. The tract at residues 686-745 (PTYCYEMNMVVLSAPAVESELSPRGGEFEMMPLGVNKSPLPKEPPRKDPPPKDPVIETIR) is bait region. Asn760, Asn787, and Asn882 each carry an N-linked (GlcNAc...) asparagine glycan. Cystine bridges form between Cys860-Cys896, Cys934-Cys1334, Cys1092-Cys1140, and Cys1365-Cys1480. The segment at residues 985-988 (CGEQ) is a cross-link (isoglutamyl cysteine thioester (Cys-Gln)). Asn1004 is a glycosylation site (N-linked (GlcNAc...) asparagine). N-linked (GlcNAc...) asparagine glycosylation is found at Asn1153, Asn1324, and Asn1437.

This sequence belongs to the protease inhibitor I39 (alpha-2-macroglobulin) family. Monomer. As to expression, plasma.

It is found in the secreted. Functionally, a proteinase activates the inhibitor by specific proteolysis in the bait region, which, by an unknown mechanism leads to reaction at the cysteinyl-glutamyl internal thiol ester site and to a conformational change, whereby the proteinase is trapped and/or covalently bound to the inhibitor. While in the tetrameric proteinase inhibitors steric inhibition is sufficiently strong, monomeric forms need a covalent linkage between the activated glutamyl residue of the original thiol ester and a terminal amino group of a lysine or another nucleophilic group on the proteinase, for inhibition to be effective. The protein is Murinoglobulin-1 of Rattus norvegicus (Rat).